We begin with the raw amino-acid sequence, 349 residues long: Ureidoglycolate dehydrogenase (NAD(+)) (349 aa).

Residue His-116 is the Proton acceptor of the active site. Residues Ser-140, 174-176 (DMA), Lys-224, and 306-308 (GQD) contribute to the NAD(+) site.

It belongs to the LDH2/MDH2 oxidoreductase family. In terms of assembly, homodimer.

It is found in the cytoplasm. The catalysed reaction is (S)-ureidoglycolate + NAD(+) = N-carbamoyl-2-oxoglycine + NADH + H(+). Its pathway is nitrogen metabolism; (S)-allantoin degradation; oxalurate from (S)-ureidoglycolate: step 1/1. AllD plays a pivotal role as a metabolic branch-point enzyme in nitrogen utilization via the assimilation of allantoin. It is able to utilize allantoin as a sole source of nitrogen under anaerobic conditions. Catalyzes the oxidation of ureidoglycolate to oxalurate. The polypeptide is Ureidoglycolate dehydrogenase (NAD(+)) (Escherichia coli (strain K12)).